Consider the following 134-residue polypeptide: ATP synthase epsilon chain (134 aa).

The protein belongs to the ATPase epsilon chain family. F-type ATPases have 2 components, CF(1) - the catalytic core - and CF(0) - the membrane proton channel. CF(1) has five subunits: alpha(3), beta(3), gamma(1), delta(1), epsilon(1). CF(0) has three main subunits: a, b and c.

It localises to the cell membrane. Functionally, produces ATP from ADP in the presence of a proton gradient across the membrane. This is ATP synthase epsilon chain from Staphylococcus aureus (strain USA300).